A 571-amino-acid polypeptide reads, in one-letter code: Urease subunit alpha (571 aa).

The Urease domain maps to 129-571; that stretch reads GGIDTHIHFI…LPMAQRYFLF (443 aa). The Ni(2+) site is built by histidine 134, histidine 136, and lysine 217. N6-carboxylysine is present on lysine 217. Residue histidine 219 participates in substrate binding. Residues histidine 246 and histidine 272 each contribute to the Ni(2+) site. Histidine 320 serves as the catalytic Proton donor. Aspartate 360 serves as a coordination point for Ni(2+).

It belongs to the metallo-dependent hydrolases superfamily. Urease alpha subunit family. As to quaternary structure, heterotrimer of UreA (gamma), UreB (beta) and UreC (alpha) subunits. Three heterotrimers associate to form the active enzyme. Requires Ni cation as cofactor. Carboxylation allows a single lysine to coordinate two nickel ions.

The protein resides in the cytoplasm. It catalyses the reaction urea + 2 H2O + H(+) = hydrogencarbonate + 2 NH4(+). It participates in nitrogen metabolism; urea degradation; CO(2) and NH(3) from urea (urease route): step 1/1. The chain is Urease subunit alpha from Cupriavidus pinatubonensis (strain JMP 134 / LMG 1197) (Cupriavidus necator (strain JMP 134)).